A 259-amino-acid polypeptide reads, in one-letter code: UPF0246 protein PputGB1_4560 (259 aa).

It belongs to the UPF0246 family.

In Pseudomonas putida (strain GB-1), this protein is UPF0246 protein PputGB1_4560.